We begin with the raw amino-acid sequence, 137 residues long: Large ribosomal subunit protein uL16 (137 aa).

The protein belongs to the universal ribosomal protein uL16 family. As to quaternary structure, part of the 50S ribosomal subunit.

Its function is as follows. Binds 23S rRNA and is also seen to make contacts with the A and possibly P site tRNAs. In Psychrobacter sp. (strain PRwf-1), this protein is Large ribosomal subunit protein uL16.